The chain runs to 425 residues: Phosphoribosylamine--glycine ligase (425 aa).

The ATP-grasp domain maps to 107–312 (KDLCARYNIP…LLVLLNAAVD (206 aa)). Residue 133–193 (VDQTGAPIVI…EEFMTGEEAS (61 aa)) coordinates ATP. Residues 214–233 (RVGDGDVGPNTGGMGAYSPA) are disordered. Residues E282 and N284 each contribute to the Mg(2+) site.

Belongs to the GARS family. The cofactor is Mg(2+). It depends on Mn(2+) as a cofactor.

The enzyme catalyses 5-phospho-beta-D-ribosylamine + glycine + ATP = N(1)-(5-phospho-beta-D-ribosyl)glycinamide + ADP + phosphate + H(+). It participates in purine metabolism; IMP biosynthesis via de novo pathway; N(1)-(5-phospho-D-ribosyl)glycinamide from 5-phospho-alpha-D-ribose 1-diphosphate: step 2/2. In Mesorhizobium japonicum (strain LMG 29417 / CECT 9101 / MAFF 303099) (Mesorhizobium loti (strain MAFF 303099)), this protein is Phosphoribosylamine--glycine ligase.